Consider the following 1574-residue polypeptide: RNA2 polyprotein (1574 aa).

Positions 361–422 (ERVKAFSSHH…ERLRAAKEDR (62 aa)) form a coiled coil. Disordered stretches follow at residues 557–579 (PPPIITAPVGQRVGGNPPTETPG) and 863–916 (RSAT…RGYT).

Specific enzymatic cleavages by RNA1 encoded picornain 3C-like protease in vivo yield mature proteins.

It is found in the host cell junction. Its subcellular location is the host plasmodesma. It localises to the virion. Functionally, transports viral genome to neighboring plant cells directly through plasmosdesmata, without any budding. The movement protein allows efficient cell to cell propagation, by bypassing the host cell wall barrier. Acts by forming a tubular structure at the host plasmodesmata, enlarging it enough to allow free passage of virion capsids. Its function is as follows. Capsid proteins form a capsid enclosing the viral positive strand RNA genome. Together they form an icosahedral capsid pseudo T=3 with a diameter of approximately 30 nm (Potential). The chain is RNA2 polyprotein from Citrus unshiu (Satsuma mandarin).